Reading from the N-terminus, the 328-residue chain is Beta-ketoacyl-[acyl-carrier-protein] synthase III (328 aa).

Catalysis depends on residues cysteine 122 and histidine 255. Positions 256 to 260 (QANIR) are ACP-binding. Asparagine 285 is a catalytic residue.

The protein belongs to the thiolase-like superfamily. FabH family. Homodimer.

Its subcellular location is the cytoplasm. The catalysed reaction is malonyl-[ACP] + acetyl-CoA + H(+) = 3-oxobutanoyl-[ACP] + CO2 + CoA. The protein operates within lipid metabolism; fatty acid biosynthesis. Its function is as follows. Catalyzes the condensation reaction of fatty acid synthesis by the addition to an acyl acceptor of two carbons from malonyl-ACP. Catalyzes the first condensation reaction which initiates fatty acid synthesis and may therefore play a role in governing the total rate of fatty acid production. Possesses both acetoacetyl-ACP synthase and acetyl transacylase activities. Its substrate specificity determines the biosynthesis of branched-chain and/or straight-chain of fatty acids. The polypeptide is Beta-ketoacyl-[acyl-carrier-protein] synthase III (Polynucleobacter asymbioticus (strain DSM 18221 / CIP 109841 / QLW-P1DMWA-1) (Polynucleobacter necessarius subsp. asymbioticus)).